A 413-amino-acid chain; its full sequence is Succinate--CoA ligase [ADP-forming] subunit beta, mitochondrial (413 aa).

The transit peptide at 1-2 (RR) directs the protein to the mitochondrion. The 228-residue stretch at 11 to 238 (MGLLQEAGIS…SNSAYRQKKI (228 aa)) folds into the ATP-grasp domain. ATP is bound by residues lysine 48 and 55 to 57 (GRG). Mg(2+)-binding residues include asparagine 208 and aspartate 222. Substrate is bound by residues asparagine 273 and 330–332 (GIM).

This sequence belongs to the succinate/malate CoA ligase beta subunit family. ATP-specific subunit beta subfamily. In terms of assembly, heterodimer of an alpha and a beta subunit. The beta subunit determines specificity for ATP. Mg(2+) is required as a cofactor. In terms of tissue distribution, widely expressed. Not present in liver.

It localises to the mitochondrion. It carries out the reaction succinate + ATP + CoA = succinyl-CoA + ADP + phosphate. Its pathway is carbohydrate metabolism; tricarboxylic acid cycle; succinate from succinyl-CoA (ligase route): step 1/1. In terms of biological role, ATP-specific succinyl-CoA synthetase functions in the citric acid cycle (TCA), coupling the hydrolysis of succinyl-CoA to the synthesis of ATP and thus represents the only step of substrate-level phosphorylation in the TCA. The beta subunit provides nucleotide specificity of the enzyme and binds the substrate succinate, while the binding sites for coenzyme A and phosphate are found in the alpha subunit. The polypeptide is Succinate--CoA ligase [ADP-forming] subunit beta, mitochondrial (Columba livia (Rock dove)).